A 623-amino-acid chain; its full sequence is Methionine--tRNA ligase (623 aa).

The short motif at 11 to 21 (PYANGPRHIGH) is the 'HIGH' region element. 4 residues coordinate Zn(2+): cysteine 143, cysteine 146, cysteine 156, and cysteine 159. Positions 347–351 (KFSSS) match the 'KMSKS' region motif. Serine 350 contacts ATP.

Belongs to the class-I aminoacyl-tRNA synthetase family. MetG type 1 subfamily. In terms of assembly, monomer. It depends on Zn(2+) as a cofactor.

It localises to the cytoplasm. It carries out the reaction tRNA(Met) + L-methionine + ATP = L-methionyl-tRNA(Met) + AMP + diphosphate. Functionally, is required not only for elongation of protein synthesis but also for the initiation of all mRNA translation through initiator tRNA(fMet) aminoacylation. The protein is Methionine--tRNA ligase of Bifidobacterium animalis subsp. lactis (strain AD011).